Consider the following 210-residue polypeptide: Putative fructokinase-8 (210 aa).

This sequence belongs to the carbohydrate kinase PfkB family.

The catalysed reaction is D-fructose + ATP = D-fructose 6-phosphate + ADP + H(+). The protein operates within glycan biosynthesis; starch biosynthesis. May play an important role in maintaining the flux of carbon towards starch formation. This is Putative fructokinase-8 from Arabidopsis thaliana (Mouse-ear cress).